Reading from the N-terminus, the 417-residue chain is MSENLIIFNAKVVTPLGFSARKGKEMAELRILEKATVEVVDGIITYVGPNRGEVRDGYYHHFWHYNARGKCLLPGFVDSHTHFVFGGERAEEFSWRLKGESYMSIMQRGGGIASTVQATRELSFIHLRSKAEGLLKKMTAMGITTVEGKSGYGLNRETELLQLKVMRSLNKDEGVRVDIVPTFLGAHALPDEYRERPDDYIDFLIRELLPVIQRDSLAEFCDVFCEEGVFSIEQSRRLLTAAGDYGLLPKLHADEIVPLGGAELAAELGAVSADHLLHASDAGIEAMARKGVVATLLPLTAFALKEPYARGRDMIDAGCAVALATDLNPGSCFSGSIPLTFALACIHMQLTVEEAITALTLNGAAALNRADSIGSIEVGKKGDFVVLDSDNYHILPYYVGMNCVNTTIKGGMLYPSV.

Residues His-80 and His-82 each coordinate Fe(3+). His-80 and His-82 together coordinate Zn(2+). Residues Arg-89, Tyr-152, and His-187 each coordinate 4-imidazolone-5-propanoate. Residue Tyr-152 coordinates N-formimidoyl-L-glutamate. His-252 serves as a coordination point for Fe(3+). Residue His-252 coordinates Zn(2+). Position 255 (Glu-255) interacts with 4-imidazolone-5-propanoate. Asp-326 is a Fe(3+) binding site. Asp-326 provides a ligand contact to Zn(2+). 2 residues coordinate N-formimidoyl-L-glutamate: Asn-328 and Gly-330. Residue Ser-331 coordinates 4-imidazolone-5-propanoate.

The protein belongs to the metallo-dependent hydrolases superfamily. HutI family. It depends on Zn(2+) as a cofactor. Requires Fe(3+) as cofactor.

The protein localises to the cytoplasm. It catalyses the reaction 4-imidazolone-5-propanoate + H2O = N-formimidoyl-L-glutamate. Its pathway is amino-acid degradation; L-histidine degradation into L-glutamate; N-formimidoyl-L-glutamate from L-histidine: step 3/3. Functionally, catalyzes the hydrolytic cleavage of the carbon-nitrogen bond in imidazolone-5-propanoate to yield N-formimidoyl-L-glutamate. It is the third step in the universal histidine degradation pathway. This is Imidazolonepropionase from Bacteroides fragilis (strain YCH46).